A 92-amino-acid chain; its full sequence is Putative transcription elongation factor S-II-like protein 81R (92 aa).

The TFIIS-type zinc-finger motif lies at 51–91 (GTVKCPGCGSRRVHALQRQTRSADEPMTLFAMCSECGKRWT). The Zn(2+) site is built by cysteine 55, cysteine 58, cysteine 83, and cysteine 86.

This is Putative transcription elongation factor S-II-like protein 81R from Dryophytes versicolor (chameleon treefrog).